We begin with the raw amino-acid sequence, 434 residues long: Beta-enolase (434 aa).

An N-acetylserine modification is found at serine 2. Residues histidine 158 and glutamate 167 each contribute to the substrate site. The Proton donor role is filled by glutamate 210. Aspartate 245, glutamate 293, and aspartate 318 together coordinate Mg(2+). Substrate contacts are provided by glutamate 293 and aspartate 318. Residue lysine 343 is the Proton acceptor of the active site. Substrate contacts are provided by residues serine 370–serine 373 and lysine 394.

It belongs to the enolase family. As to quaternary structure, homodimer. Interacts with PNKD. Mg(2+) is required as a cofactor.

The protein localises to the cytoplasm. The enzyme catalyses (2R)-2-phosphoglycerate = phosphoenolpyruvate + H2O. It participates in carbohydrate degradation; glycolysis; pyruvate from D-glyceraldehyde 3-phosphate: step 4/5. Its function is as follows. Glycolytic enzyme that catalyzes the conversion of 2-phosphoglycerate to phosphoenolpyruvate. This chain is Beta-enolase (ENO3), found in Gallus gallus (Chicken).